The primary structure comprises 54 residues: UPF0391 membrane protein Rfer_1875 (54 aa).

The next 2 membrane-spanning stretches (helical) occupy residues 5–25 (AVVFFVIALIAALFGFGGIAA) and 30–50 (IGKILFIVFAILAVASFLFGL).

The protein belongs to the UPF0391 family.

It localises to the cell membrane. The polypeptide is UPF0391 membrane protein Rfer_1875 (Albidiferax ferrireducens (strain ATCC BAA-621 / DSM 15236 / T118) (Rhodoferax ferrireducens)).